A 182-amino-acid polypeptide reads, in one-letter code: Probable peptidyl-prolyl cis-trans isomerase A (182 aa).

In terms of domain architecture, PPIase cyclophilin-type spans 13–181 (QNATATLHTN…EPVVIDSITI (169 aa)). The segment at 161-182 (TTATDGNDRPTEPVVIDSITIS) is disordered.

This sequence belongs to the cyclophilin-type PPIase family.

The protein resides in the cytoplasm. The enzyme catalyses [protein]-peptidylproline (omega=180) = [protein]-peptidylproline (omega=0). In terms of biological role, PPIases accelerate the folding of proteins. It catalyzes the cis-trans isomerization of proline imidic peptide bonds in oligopeptides. The polypeptide is Probable peptidyl-prolyl cis-trans isomerase A (ppiA) (Mycobacterium leprae (strain TN)).